A 90-amino-acid chain; its full sequence is Probable Fe(2+)-trafficking protein (90 aa).

Belongs to the Fe(2+)-trafficking protein family. Monomer.

Could be a mediator in iron transactions between iron acquisition and iron-requiring processes, such as synthesis and/or repair of Fe-S clusters in biosynthetic enzymes. The chain is Probable Fe(2+)-trafficking protein from Yersinia enterocolitica serotype O:8 / biotype 1B (strain NCTC 13174 / 8081).